Here is a 1507-residue protein sequence, read N- to C-terminus: MNTIYLVPFFLGTFSGFLATLPIGPAKILAVRKFLLISKGNENEVYNLKSSNTILLASLCGLIFAQFLFVLALQFPFLYSLWVKPHFFSFFFVLVLFIYLYQIKNIQFDISNNQFLLKSESNFSYQQAAFLETLLLQLLNPVVLPNPVFCRLTNVFLFRYSTISTFFAGNFLGLLSGYGIFFLSTLFLLKRLEEDAPTIYRLVKIKIHQFFGIILVIFSFLCLSRTPLPAIKPFKLKEISTTFSSTKVWYENIWPDSFFGYDRWKRPLRLISVDEKKSQPNNELKPFNKMFFSQFFFEGGIQDGNYRLVHNFPQSLSLISQNINSILNNKLNNSQIESIEKNKNFIDEWIQEKKNRQNQISQNINTKIKHIEKGSYLEELVEKKFSSFDNNKNKISKQMDPRLNADIRGKKFFFKNKSFLFLTKEFFSKKDSLFAVEKKNLIDTYTKNKFKLFLTENSQNLSSLETRTEKIPFITWKPIIQSFYDKNQNLKETSLDQNNVVKDQLDLDGLKNKRSWHSLFKKISPPFSSESSMGEKLINFENELKQEENNSKMAQIYKPMPLWNLNFNKKELNLLKRQSNNKLHLKIFFPKSNHLADRQNFVPPLMPFFRRNEFPGTITSRRGKAVCWNTFQKKPHSPLFIHHLNLLKNFFAKRKKIQINQDVPTKSWQSTSKLFQFLRDYLLSLQAYIRKYLKLPFLIIIKNFIRQLFFQPAEWEKDWTNLSKEVYVQCDFYGKAGSVGVKLPNFFANDEPKQIKIVNPFELRFWTRSFSEQSSLQESENSSFLNVWGRETKMPFGKVKKSPSFWQLFIERIKLILQYKILKNLSVSSSIDSIEIQKEIKNPRIQSQIDVQQNFQIEQSKRNLGTKDEEKVKNLNKKIIDNNFKYKTTKRKIVNNSTQNKTFSDFNKKEKINRTRQYTFQNMSILLQRQWFHFYRLFLKKERELFFELQTKMFEMKKIISRKNTKVIKIFLKLFYNVSRFLRSLYYQISEFFNWLSLKFVKNQKEISSNIDAFDLKPTKNLSQAYIIHSIWEDRMMSRPNITSLMKSWNQNVSLKNNLENFLNKQGILGNEKPENLTEHQWQEWLKNFRVYTPSLKLWALWAPNYWTQAVEQYWKELPSSKLKSILNQEPNKINKSLNFTTSLDNSTLNKFLEPHLPLFQAVQKQKKLWKFNILSRNYTEVTNDGDIDSFFSWQTTDFDKKTHYLFDTLKKVKGKDKNLIVSPINLSSLPQIKENKLKRNLSQQNIKKELPLIQREKKRLDFDIKLQTLRQRGTFFPVSTRRWKLKKLKNKLEKLAKTVIKKPQSGELSSSLTIGEKNKKLIRELFVAENRLFTNILENWNSKVLDDELLMYNTISSILRFANKNINALAINNSDSLSLFPRNILRPLDLNFLLLEDIYLPTYLREMKILEYFHFEKENQNIPSTSTVSHSHFSNKKEKTIYAETINKWHLILQQKQNVIKDRQTIVRFLWPTHRLEDLSCINRFWLGTANQSRFSILRIQTVPNI.

The next 6 membrane-spanning stretches (helical) occupy residues I4–G24, T53–L73, L81–Y101, A129–F149, I163–L183, and L202–C222.

Belongs to the TIC214 family. As to quaternary structure, part of the Tic complex.

Its subcellular location is the plastid. It localises to the chloroplast inner membrane. Involved in protein precursor import into chloroplasts. May be part of an intermediate translocation complex acting as a protein-conducting channel at the inner envelope. The sequence is that of Protein TIC 214 from Staurastrum punctulatum (Green alga).